A 492-amino-acid chain; its full sequence is Probable Xaa-Pro aminopeptidase AO090005001240 (492 aa).

Asp272, Asp283, Glu420, and Glu459 together coordinate Mn(2+).

This sequence belongs to the peptidase M24B family. It depends on Mn(2+) as a cofactor.

It carries out the reaction Release of any N-terminal amino acid, including proline, that is linked to proline, even from a dipeptide or tripeptide.. Catalyzes the removal of a penultimate prolyl residue from the N-termini of peptides. The protein is Probable Xaa-Pro aminopeptidase AO090005001240 of Aspergillus oryzae (strain ATCC 42149 / RIB 40) (Yellow koji mold).